We begin with the raw amino-acid sequence, 568 residues long: MKGIKVVETAFRDAHQSLLATRLRTRDMTPIAEEMDRVGFFSLEAWGGATFDTCIRYLNEDPWERLRELKEHVKRTPIQMLLRGQNLVGYKHYPDDIVRKFIEKSYENGVDVFRIFDALNDIRNMEYAIKVAREQEAHVQGVICYTISPYHTLESYVDFARELEALECDSVAIKDMAGLISPHDAYELVRALKEETDLMVNLHCHCTSGMTPMSYYAACEAGVDILDTAISPLSWGASQPPTESIVAALRDTPYDTGLDLEILKNIKKYFEEIRKKYSSILDPIAEQIDTDVLIYQIPGGMLSNLVAQLKEQNALDRYEEVLEEMPRVRKDMGYPPLVTPTSQIVGIQAVMNVLSGERYSMVTNEVKDYFRGLYGRPPAPLNEEVARKVIGDEKPIDCRPADILKPQYDECRRKGEEMGIIEKEEDILTLALYPAIAPKFLRGEIEEEPLEPPAEEMAPTGEVPTVFHVEVDGDEFEVKVVPTGYMTIEEAEPEPVDVEGAVKSTMQGMVVKLKVSEGDQVNAGDVVAVVEAMKMENDIQTPHGGVVEKIYTAEGEKVETGDIIMVIK.

A Pyruvate carboxyltransferase domain is found at I4–K264. Residues R12–Q16 and R83 contribute to the substrate site. A divalent metal cation is bound at residue D13. 3 residues coordinate a divalent metal cation: K174, H203, and H205. Position 174 is an N6-carboxylysine (K174). Residue T339 participates in substrate binding. The 76-residue stretch at P493–K568 folds into the Biotinyl-binding domain. K534 carries the post-translational modification N6-biotinyllysine.

Heterooctamer of four A and four B subunits. Requires Mg(2+) as cofactor. Mn(2+) serves as cofactor. Co(2+) is required as a cofactor.

The catalysed reaction is hydrogencarbonate + pyruvate + ATP = oxaloacetate + ADP + phosphate + H(+). Inhibited by ADP and alpha-ketoglutarate. Pyruvate carboxylase catalyzes a 2-step reaction, involving the ATP-dependent carboxylation of the covalently attached biotin in the first step and the transfer of the carboxyl group to pyruvate in the second. In Methanothermobacter thermautotrophicus (strain ATCC 29096 / DSM 1053 / JCM 10044 / NBRC 100330 / Delta H) (Methanobacterium thermoautotrophicum), this protein is Pyruvate carboxylase subunit B (pycB).